The following is a 464-amino-acid chain: UDP-glycosyltransferase 76C1 (464 aa).

UDP-alpha-D-glucose-binding positions include Ser279, 338–340 (APQ), 355–363 (HNGWNSTLE), and 377–380 (KWDQ).

Belongs to the UDP-glycosyltransferase family.

Inhibited by olomoucine and 3-isobutyl-1-methylxanthine. Involved in the N-glucosylation of cytokinins. Catalyzes the formation of both the 7-N and the 9-N-glucosides. This Arabidopsis thaliana (Mouse-ear cress) protein is UDP-glycosyltransferase 76C1 (UGT76C1).